The sequence spans 357 residues: Protein RecA (357 aa).

An ATP-binding site is contributed by 67 to 74; it reads GPESSGKT.

The protein belongs to the RecA family.

It is found in the cytoplasm. In terms of biological role, can catalyze the hydrolysis of ATP in the presence of single-stranded DNA, the ATP-dependent uptake of single-stranded DNA by duplex DNA, and the ATP-dependent hybridization of homologous single-stranded DNAs. It interacts with LexA causing its activation and leading to its autocatalytic cleavage. The protein is Protein RecA of Leifsonia xyli subsp. xyli (strain CTCB07).